The sequence spans 559 residues: 2-succinyl-5-enolpyruvyl-6-hydroxy-3-cyclohexene-1-carboxylate synthase (559 aa).

Belongs to the TPP enzyme family. MenD subfamily. In terms of assembly, homodimer. Mg(2+) serves as cofactor. It depends on Mn(2+) as a cofactor. Requires thiamine diphosphate as cofactor.

The enzyme catalyses isochorismate + 2-oxoglutarate + H(+) = 5-enolpyruvoyl-6-hydroxy-2-succinyl-cyclohex-3-ene-1-carboxylate + CO2. The protein operates within quinol/quinone metabolism; 1,4-dihydroxy-2-naphthoate biosynthesis; 1,4-dihydroxy-2-naphthoate from chorismate: step 2/7. It participates in quinol/quinone metabolism; menaquinone biosynthesis. Catalyzes the thiamine diphosphate-dependent decarboxylation of 2-oxoglutarate and the subsequent addition of the resulting succinic semialdehyde-thiamine pyrophosphate anion to isochorismate to yield 2-succinyl-5-enolpyruvyl-6-hydroxy-3-cyclohexene-1-carboxylate (SEPHCHC). The sequence is that of 2-succinyl-5-enolpyruvyl-6-hydroxy-3-cyclohexene-1-carboxylate synthase from Edwardsiella ictaluri (strain 93-146).